A 352-amino-acid chain; its full sequence is DNA polymerase IV (352 aa).

Residues 6–187 (IIHIDCDCFY…LPVSKLHGVG (182 aa)) form the UmuC domain. The Mg(2+) site is built by D10 and D105. Residue E106 is part of the active site.

It belongs to the DNA polymerase type-Y family. In terms of assembly, monomer. Mg(2+) is required as a cofactor.

Its subcellular location is the cytoplasm. It catalyses the reaction DNA(n) + a 2'-deoxyribonucleoside 5'-triphosphate = DNA(n+1) + diphosphate. In terms of biological role, poorly processive, error-prone DNA polymerase involved in untargeted mutagenesis. Copies undamaged DNA at stalled replication forks, which arise in vivo from mismatched or misaligned primer ends. These misaligned primers can be extended by PolIV. Exhibits no 3'-5' exonuclease (proofreading) activity. May be involved in translesional synthesis, in conjunction with the beta clamp from PolIII. The protein is DNA polymerase IV of Ectopseudomonas mendocina (strain ymp) (Pseudomonas mendocina).